Reading from the N-terminus, the 371-residue chain is Chaperone protein DnaJ (371 aa).

Positions 5–69 (DYYEVLGLSK…QKRAQYDQFG (65 aa)) constitute a J domain. The CR-type zinc-finger motif lies at 133–215 (GKELNVEIPV…CHGSGKVRKR (83 aa)). Residues Cys-146, Cys-149, Cys-163, Cys-166, Cys-189, Cys-192, Cys-203, and Cys-206 each coordinate Zn(2+). 4 CXXCXGXG motif repeats span residues 146–153 (CDTCKGSG), 163–170 (CKHCSGSG), 189–196 (CGHCSGTG), and 203–210 (CTTCHGSG).

The protein belongs to the DnaJ family. In terms of assembly, homodimer. Zn(2+) serves as cofactor.

It localises to the cytoplasm. Functionally, participates actively in the response to hyperosmotic and heat shock by preventing the aggregation of stress-denatured proteins and by disaggregating proteins, also in an autonomous, DnaK-independent fashion. Unfolded proteins bind initially to DnaJ; upon interaction with the DnaJ-bound protein, DnaK hydrolyzes its bound ATP, resulting in the formation of a stable complex. GrpE releases ADP from DnaK; ATP binding to DnaK triggers the release of the substrate protein, thus completing the reaction cycle. Several rounds of ATP-dependent interactions between DnaJ, DnaK and GrpE are required for fully efficient folding. Also involved, together with DnaK and GrpE, in the DNA replication of plasmids through activation of initiation proteins. This chain is Chaperone protein DnaJ, found in Bacillus cereus (strain G9842).